A 207-amino-acid polypeptide reads, in one-letter code: Protein GET1 (207 aa).

Residues methionine 1 to leucine 4 lie on the Lumenal side of the membrane. A helical transmembrane segment spans residues leucine 5–serine 24. Residues threonine 25–arginine 110 are Cytoplasmic-facing. Positions isoleucine 44 to arginine 97 form a coiled coil. The helical transmembrane segment at tryptophan 111 to phenylalanine 131 threads the bilayer. At threonine 132–threonine 155 the chain is on the lumenal side. A helical membrane pass occupies residues valine 156 to isoleucine 172. The Cytoplasmic segment spans residues glycine 173–glutamine 207.

It belongs to the WRB/GET1 family. In terms of assembly, interacts with GET3.

Its subcellular location is the endoplasmic reticulum membrane. In terms of biological role, required for the post-translational delivery of tail-anchored (TA) proteins to the endoplasmic reticulum. Acts as a membrane receptor for soluble GET3, which recognizes and selectively binds the transmembrane domain of TA proteins in the cytosol. This chain is Protein GET1, found in Paracoccidioides brasiliensis (strain Pb18).